A 192-amino-acid polypeptide reads, in one-letter code: uncharacterized protein (192 aa).

Residues 29 to 160 enclose the Nudix hydrolase domain; sequence HRQAAVLIPI…PLDIYRRGDS (132 aa). A Nudix box motif is present at residues 67 to 89; sequence GAVDDTDASVIAAALREAEEEVA. Mg(2+) contacts are provided by Glu83 and Glu87.

This sequence belongs to the Nudix hydrolase family. PCD1 subfamily. It depends on Mn(2+) as a cofactor. Mg(2+) is required as a cofactor.

Probably mediates the hydrolysis of some nucleoside diphosphate derivatives. This is an uncharacterized protein from Shigella sonnei (strain Ss046).